Reading from the N-terminus, the 307-residue chain is Acetyl-coenzyme A carboxylase carboxyl transferase subunit beta (307 aa).

Residues 25–294 (LWIKDPESGE…TEENGSRRLP (270 aa)) form the CoA carboxyltransferase N-terminal domain.

It belongs to the AccD/PCCB family. Acetyl-CoA carboxylase is a heterohexamer composed of biotin carboxyl carrier protein (AccB), biotin carboxylase (AccC) and two subunits each of ACCase subunit alpha (AccA) and ACCase subunit beta (AccD).

It is found in the cytoplasm. It catalyses the reaction N(6)-carboxybiotinyl-L-lysyl-[protein] + acetyl-CoA = N(6)-biotinyl-L-lysyl-[protein] + malonyl-CoA. It participates in lipid metabolism; malonyl-CoA biosynthesis; malonyl-CoA from acetyl-CoA: step 1/1. In terms of biological role, component of the acetyl coenzyme A carboxylase (ACC) complex. Biotin carboxylase (BC) catalyzes the carboxylation of biotin on its carrier protein (BCCP) and then the CO(2) group is transferred by the transcarboxylase to acetyl-CoA to form malonyl-CoA. The polypeptide is Acetyl-coenzyme A carboxylase carboxyl transferase subunit beta (Chelativorans sp. (strain BNC1)).